The sequence spans 520 residues: Hydroxymethylglutaryl-CoA synthase, cytoplasmic (520 aa).

S4 is modified (phosphoserine). A44 contacts (3S)-3-hydroxy-3-methylglutaryl-CoA. Residue 44–46 (AGK) coordinates CoA. An N6-acetyllysine modification is found at K46. E95 (proton donor/acceptor) is an active-site residue. (3S)-3-hydroxy-3-methylglutaryl-CoA is bound by residues C129, N167, T171, S221, and H264. C129 (acyl-thioester intermediate) is an active-site residue. N167 contacts CoA. S221 serves as a coordination point for CoA. Catalysis depends on H264, which acts as the Proton donor/acceptor. Residues K269 and K273 each coordinate CoA. (3S)-3-hydroxy-3-methylglutaryl-CoA contacts are provided by K273, N343, and S377. K273 bears the N6-acetyllysine mark. T476 bears the Phosphothreonine mark. Residues 492–520 (HIPSPAKKVPRLPATAAEPEAAVISNGEH) form a disordered region. Phosphoserine is present on residues S495 and S516.

This sequence belongs to the thiolase-like superfamily. HMG-CoA synthase family. In terms of assembly, homodimer.

It is found in the cytoplasm. It catalyses the reaction acetoacetyl-CoA + acetyl-CoA + H2O = (3S)-3-hydroxy-3-methylglutaryl-CoA + CoA + H(+). The protein operates within metabolic intermediate biosynthesis; (R)-mevalonate biosynthesis; (R)-mevalonate from acetyl-CoA: step 2/3. Functionally, catalyzes the condensation of acetyl-CoA with acetoacetyl-CoA to form HMG-CoA, which is converted by HMG-CoA reductase (HMGCR) into mevalonate, a precursor for cholesterol synthesis. The polypeptide is Hydroxymethylglutaryl-CoA synthase, cytoplasmic (Pongo abelii (Sumatran orangutan)).